We begin with the raw amino-acid sequence, 231 residues long: Large ribosomal subunit protein uL1 (231 aa).

It belongs to the universal ribosomal protein uL1 family. As to quaternary structure, part of the 50S ribosomal subunit.

Functionally, binds directly to 23S rRNA. The L1 stalk is quite mobile in the ribosome, and is involved in E site tRNA release. Its function is as follows. Protein L1 is also a translational repressor protein, it controls the translation of the L11 operon by binding to its mRNA. This chain is Large ribosomal subunit protein uL1, found in Herminiimonas arsenicoxydans.